Consider the following 316-residue polypeptide: MSKKPPNRPGITFEIGARLEALDYLQKWYPSRIEKIDYEEGKMLVHFERWSHRYDEWIYWDSNRLRPLERPALRKEGLKDEEDFFDFKAGEEVLARWTDCRYYPAKIEAINKEGTFTVQFYDGVIRCLKRMHIKAMPEDAKGQVKAQHPLSWCCPSDPAGSCNQSMGSEDWIALVKAAAAAAAKNKTGNKPRTSANSNKDKEKDERKWFKVPSKKEETSTSITTPEVEKKEDLPTSSETFVGLHVENVPKMVFPQPESTLTNKRKNNQGNSFQAKRARLNKITGLLASKAVGVDGAEKKEDYNETAPMLEQVLHSL.

A Tudor 1 domain is found at 11–71 (ITFEIGARLE…SNRLRPLERP (61 aa)). Glycyl lysine isopeptide (Lys-Gly) (interchain with G-Cter in SUMO2) cross-links involve residues Lys-75 and Lys-79. The region spanning 85–141 (FDFKAGEEVLARWTDCRYYPAKIEAINKEGTFTVQFYDGVIRCLKRMHIKAMPEDAK) is the Tudor 2 domain. The segment at 183-237 (AKNKTGNKPRTSANSNKDKEKDERKWFKVPSKKEETSTSITTPEVEKKEDLPTSS) is disordered. Positions 186–197 (KTGNKPRTSANS) are enriched in polar residues. A compositionally biased stretch (basic and acidic residues) spans 198 to 218 (NKDKEKDERKWFKVPSKKEET).

In terms of assembly, interacts with methylated DNMT1 (DNMT1K142me1). Interacts with SOX2.

The protein localises to the nucleus. Functionally, is a negative regulator of proteasomal degradation of a set of methylated proteins, including DNMT1 and SOX2. Involved in the maintainance of embryonic stem cells pluripotency, through the regulation of SOX2 levels. This chain is PHD finger protein 20-like protein 1 (PHF20L1), found in Bos taurus (Bovine).